Here is a 521-residue protein sequence, read N- to C-terminus: Glucose-6-phosphate isomerase (521 aa).

The active-site Proton donor is E327. Active-site residues include H358 and K486.

The protein belongs to the GPI family.

Its subcellular location is the cytoplasm. The enzyme catalyses alpha-D-glucose 6-phosphate = beta-D-fructose 6-phosphate. It participates in carbohydrate biosynthesis; gluconeogenesis. The protein operates within carbohydrate degradation; glycolysis; D-glyceraldehyde 3-phosphate and glycerone phosphate from D-glucose: step 2/4. In terms of biological role, catalyzes the reversible isomerization of glucose-6-phosphate to fructose-6-phosphate. The chain is Glucose-6-phosphate isomerase from Bordetella bronchiseptica (strain ATCC BAA-588 / NCTC 13252 / RB50) (Alcaligenes bronchisepticus).